Consider the following 183-residue polypeptide: Archaemetzincin (183 aa).

A Zn(2+)-binding site is contributed by His-132. Glu-133 serves as the catalytic Proton acceptor. Zn(2+)-binding residues include His-136, His-142, Cys-143, Cys-148, Cys-167, and Cys-170.

This sequence belongs to the peptidase M54 family. In terms of assembly, monomer. Zn(2+) is required as a cofactor.

Probable zinc metalloprotease whose natural substrate is unknown. This chain is Archaemetzincin, found in Aeropyrum pernix (strain ATCC 700893 / DSM 11879 / JCM 9820 / NBRC 100138 / K1).